The chain runs to 134 residues: Small ribosomal subunit protein uS11 (134 aa).

The protein belongs to the universal ribosomal protein uS11 family. Part of the 30S ribosomal subunit. Interacts with proteins S7 and S18. Binds to IF-3.

In terms of biological role, located on the platform of the 30S subunit, it bridges several disparate RNA helices of the 16S rRNA. Forms part of the Shine-Dalgarno cleft in the 70S ribosome. The chain is Small ribosomal subunit protein uS11 from Frankia alni (strain DSM 45986 / CECT 9034 / ACN14a).